The primary structure comprises 163 residues: MKKKSGLSFLWLSAVAFVIDLLTKYLVTQNFELYESVNILPVFNLTYARNTGAAFSFLAEHGGWQKYFFIALALIISAVLVYLLRKNSARQKLQNSAYALIIGGALANMADRAYHGFVVDFFDFYWREWHYPVFNVADIAICVGVGLLILDSFKNGEKKANEQ.

The next 3 helical transmembrane spans lie at 7 to 27, 64 to 84, and 99 to 119; these read LSFL…KYLV, WQKY…VYLL, and ALII…GFVV. Catalysis depends on residues Asp120 and Asp138. Residues 133 to 153 traverse the membrane as a helical segment; sequence VFNVADIAICVGVGLLILDSF.

Belongs to the peptidase A8 family.

It localises to the cell inner membrane. It carries out the reaction Release of signal peptides from bacterial membrane prolipoproteins. Hydrolyzes -Xaa-Yaa-Zaa-|-(S,diacylglyceryl)Cys-, in which Xaa is hydrophobic (preferably Leu), and Yaa (Ala or Ser) and Zaa (Gly or Ala) have small, neutral side chains.. Its pathway is protein modification; lipoprotein biosynthesis (signal peptide cleavage). Functionally, this protein specifically catalyzes the removal of signal peptides from prolipoproteins. The polypeptide is Lipoprotein signal peptidase (Actinobacillus succinogenes (strain ATCC 55618 / DSM 22257 / CCUG 43843 / 130Z)).